Consider the following 371-residue polypeptide: S-adenosylmethionine:tRNA ribosyltransferase-isomerase (371 aa).

This sequence belongs to the QueA family. In terms of assembly, monomer.

It localises to the cytoplasm. The catalysed reaction is 7-aminomethyl-7-carbaguanosine(34) in tRNA + S-adenosyl-L-methionine = epoxyqueuosine(34) in tRNA + adenine + L-methionine + 2 H(+). It participates in tRNA modification; tRNA-queuosine biosynthesis. Its function is as follows. Transfers and isomerizes the ribose moiety from AdoMet to the 7-aminomethyl group of 7-deazaguanine (preQ1-tRNA) to give epoxyqueuosine (oQ-tRNA). The polypeptide is S-adenosylmethionine:tRNA ribosyltransferase-isomerase (Nitratidesulfovibrio vulgaris (strain DP4) (Desulfovibrio vulgaris)).